The primary structure comprises 108 residues: uncharacterized protein (108 aa).

An HTH cro/C1-type domain is found at 20–74 (VRQRRTALILDQETLARRIGVSFQQIQKYERGRNRISASRLYDIAKALAVPIDYF). The segment at residues 31 to 50 (QETLARRIGVSFQQIQKYER) is a DNA-binding region (H-T-H motif).

This is an uncharacterized protein from Rhodospirillum rubrum.